The sequence spans 400 residues: Probable aspartate/prephenate aminotransferase (400 aa).

L-aspartate-binding residues include G39, W125, and N175. At K239 the chain carries N6-(pyridoxal phosphate)lysine. Residue R375 participates in L-aspartate binding.

It belongs to the class-I pyridoxal-phosphate-dependent aminotransferase family. Homodimer. It depends on pyridoxal 5'-phosphate as a cofactor.

The protein resides in the cytoplasm. The catalysed reaction is L-aspartate + 2-oxoglutarate = oxaloacetate + L-glutamate. The enzyme catalyses L-arogenate + 2-oxoglutarate = prephenate + L-glutamate. Catalyzes the reversible conversion of aspartate and 2-oxoglutarate to glutamate and oxaloacetate. Can also transaminate prephenate in the presence of glutamate. The sequence is that of Probable aspartate/prephenate aminotransferase (aspC) from Rhizobium leguminosarum bv. phaseoli.